The following is a 400-amino-acid chain: 2-[(L-alanin-3-ylcarbamoyl)methyl]-2-hydroxybutanedioate decarboxylase (400 aa).

Position 50 is an N6-(pyridoxal phosphate)lysine (K50). Residues G228 and 266 to 269 (ECGR) contribute to the pyridoxal 5'-phosphate site. C344 acts as the Proton donor in catalysis. Y373 contributes to the pyridoxal 5'-phosphate binding site.

The protein belongs to the Orn/Lys/Arg decarboxylase class-II family. In terms of assembly, homodimer. It depends on pyridoxal 5'-phosphate as a cofactor.

The enzyme catalyses 2-[(L-alanin-3-ylcarbamoyl)methyl]-2-hydroxybutanedioate + H(+) = 2-[(2-aminoethylcarbamoyl)methyl]-2-hydroxybutanedioate + CO2. It functions in the pathway siderophore biosynthesis. Its function is as follows. Catalyzes the decarboxylation of citryl-L-2,3-diaminopropionic acid to citryl-diaminoethane, the second step in staphyloferrin B biosynthesis. The protein is 2-[(L-alanin-3-ylcarbamoyl)methyl]-2-hydroxybutanedioate decarboxylase of Staphylococcus aureus (strain NCTC 8325 / PS 47).